The sequence spans 629 residues: Glutamyl-tRNA(Gln) amidotransferase subunit E (629 aa).

The tract at residues 405-426 (PEETRRALPDGNTQYMRPLPGK) is disordered.

The protein belongs to the GatB/GatE family. GatE subfamily. As to quaternary structure, heterodimer of GatD and GatE.

It catalyses the reaction L-glutamyl-tRNA(Gln) + L-glutamine + ATP + H2O = L-glutaminyl-tRNA(Gln) + L-glutamate + ADP + phosphate + H(+). Its function is as follows. Allows the formation of correctly charged Gln-tRNA(Gln) through the transamidation of misacylated Glu-tRNA(Gln) in organisms which lack glutaminyl-tRNA synthetase. The reaction takes place in the presence of glutamine and ATP through an activated gamma-phospho-Glu-tRNA(Gln). The GatDE system is specific for glutamate and does not act on aspartate. The polypeptide is Glutamyl-tRNA(Gln) amidotransferase subunit E (Thermococcus sibiricus (strain DSM 12597 / MM 739)).